The primary structure comprises 966 residues: uncharacterized protein (966 aa).

The signal sequence occupies residues 1–24; it reads MQGNLLKVLGVLAIVATLVCFIFA. Helical transmembrane passes span 601 to 621, 711 to 731, 743 to 763, 785 to 805, 822 to 842, and 855 to 875; these read IKAILILYVMTYGAMFLLGFA, LGLSGIIYFIITFIAVCIVII, AFMATCILIGIAPLFISFLLF, VVMMAGIIVLTQLFTIYLDFV, FIGTILPIALLNVPIFCINWF, and GVNMQNIVALVIIAYGMYGYV. The interval 918 to 966 is disordered; that stretch reads TRQGITGRAEARLKQRNKTLDQAEKNRKNTQKEGGEKTNEEPPKPETPK. Over residues 926-966 the composition is skewed to basic and acidic residues; sequence AEARLKQRNKTLDQAEKNRKNTQKEGGEKTNEEPPKPETPK.

It belongs to the TrbL/VirB6 family.

Its subcellular location is the cell membrane. This is an uncharacterized protein from Rickettsia conorii (strain ATCC VR-613 / Malish 7).